Here is a 154-residue protein sequence, read N- to C-terminus: 6,7-dimethyl-8-ribityllumazine synthase (154 aa).

Residues F22, 56 to 58 (AFE), and 81 to 83 (VLI) contribute to the 5-amino-6-(D-ribitylamino)uracil site. Residue 86 to 87 (ET) coordinates (2S)-2-hydroxy-3-oxobutyl phosphate. The Proton donor role is filled by H89. L114 is a binding site for 5-amino-6-(D-ribitylamino)uracil. R128 provides a ligand contact to (2S)-2-hydroxy-3-oxobutyl phosphate.

The protein belongs to the DMRL synthase family.

It carries out the reaction (2S)-2-hydroxy-3-oxobutyl phosphate + 5-amino-6-(D-ribitylamino)uracil = 6,7-dimethyl-8-(1-D-ribityl)lumazine + phosphate + 2 H2O + H(+). It participates in cofactor biosynthesis; riboflavin biosynthesis; riboflavin from 2-hydroxy-3-oxobutyl phosphate and 5-amino-6-(D-ribitylamino)uracil: step 1/2. In terms of biological role, catalyzes the formation of 6,7-dimethyl-8-ribityllumazine by condensation of 5-amino-6-(D-ribitylamino)uracil with 3,4-dihydroxy-2-butanone 4-phosphate. This is the penultimate step in the biosynthesis of riboflavin. The polypeptide is 6,7-dimethyl-8-ribityllumazine synthase (Chlamydia pneumoniae (Chlamydophila pneumoniae)).